We begin with the raw amino-acid sequence, 341 residues long: Holliday junction branch migration complex subunit RuvB (341 aa).

A large ATPase domain (RuvB-L) region spans residues 1–182; sequence MTDADPTLRP…FGIPTRLLFY (182 aa). Residues L21, R22, G63, K66, T67, T68, 129-131, R172, Y182, and R219 each bind ATP; that span reads EDF. A Mg(2+)-binding site is contributed by T67. The segment at 183–253 is small ATPAse domain (RuvB-S); sequence TVDELFEIVS…LADHALTRLG (71 aa). Residues 256–341 are head domain (RuvB-H); it reads QLGLDGADRR…RPPGQSDLFG (86 aa). Residues R292, R311, and R316 each coordinate DNA.

It belongs to the RuvB family. Homohexamer. Forms an RuvA(8)-RuvB(12)-Holliday junction (HJ) complex. HJ DNA is sandwiched between 2 RuvA tetramers; dsDNA enters through RuvA and exits via RuvB. An RuvB hexamer assembles on each DNA strand where it exits the tetramer. Each RuvB hexamer is contacted by two RuvA subunits (via domain III) on 2 adjacent RuvB subunits; this complex drives branch migration. In the full resolvosome a probable DNA-RuvA(4)-RuvB(12)-RuvC(2) complex forms which resolves the HJ.

It localises to the cytoplasm. The enzyme catalyses ATP + H2O = ADP + phosphate + H(+). The RuvA-RuvB-RuvC complex processes Holliday junction (HJ) DNA during genetic recombination and DNA repair, while the RuvA-RuvB complex plays an important role in the rescue of blocked DNA replication forks via replication fork reversal (RFR). RuvA specifically binds to HJ cruciform DNA, conferring on it an open structure. The RuvB hexamer acts as an ATP-dependent pump, pulling dsDNA into and through the RuvAB complex. RuvB forms 2 homohexamers on either side of HJ DNA bound by 1 or 2 RuvA tetramers; 4 subunits per hexamer contact DNA at a time. Coordinated motions by a converter formed by DNA-disengaged RuvB subunits stimulates ATP hydrolysis and nucleotide exchange. Immobilization of the converter enables RuvB to convert the ATP-contained energy into a lever motion, pulling 2 nucleotides of DNA out of the RuvA tetramer per ATP hydrolyzed, thus driving DNA branch migration. The RuvB motors rotate together with the DNA substrate, which together with the progressing nucleotide cycle form the mechanistic basis for DNA recombination by continuous HJ branch migration. Branch migration allows RuvC to scan DNA until it finds its consensus sequence, where it cleaves and resolves cruciform DNA. The chain is Holliday junction branch migration complex subunit RuvB from Ruegeria pomeroyi (strain ATCC 700808 / DSM 15171 / DSS-3) (Silicibacter pomeroyi).